The sequence spans 124 residues: Protein archease (124 aa).

Ca(2+) contacts are provided by H7, D10, D123, and T124.

The protein belongs to the archease family.

In terms of biological role, activates the tRNA-splicing ligase complex by facilitating the enzymatic turnover of catalytic subunit RtcB. Acts by promoting the guanylylation of RtcB, a key intermediate step in tRNA ligation. Can also alter the NTP specificity of RtcB such that ATP, dGTP or ITP is used efficiently. May also act as a chaperone or modulator of proteins involved in DNA or RNA processing. This Thermotoga maritima (strain ATCC 43589 / DSM 3109 / JCM 10099 / NBRC 100826 / MSB8) protein is Protein archease.